The chain runs to 299 residues: Probable phosphate butyryltransferase (299 aa).

It belongs to the phosphate acetyltransferase and butyryltransferase family.

It carries out the reaction butanoyl-CoA + phosphate = butanoyl phosphate + CoA. Its function is as follows. Catalyzes the conversion of butyryl-CoA through butyryl phosphate to butyrate. The chain is Probable phosphate butyryltransferase (yqiS) from Bacillus subtilis (strain 168).